A 224-amino-acid polypeptide reads, in one-letter code: UPF0441 protein ECA0329 (224 aa).

Residues Thr180–Gly224 are disordered. Over residues Gln204–Gly224 the composition is skewed to low complexity.

It belongs to the UPF0441 family.

This Pectobacterium atrosepticum (strain SCRI 1043 / ATCC BAA-672) (Erwinia carotovora subsp. atroseptica) protein is UPF0441 protein ECA0329.